Reading from the N-terminus, the 157-residue chain is Ribosomal RNA large subunit methyltransferase H (157 aa).

S-adenosyl-L-methionine contacts are provided by residues Leu-73, Gly-104, and 123–128 (LGPLTL).

Belongs to the RNA methyltransferase RlmH family. In terms of assembly, homodimer.

It localises to the cytoplasm. It catalyses the reaction pseudouridine(1915) in 23S rRNA + S-adenosyl-L-methionine = N(3)-methylpseudouridine(1915) in 23S rRNA + S-adenosyl-L-homocysteine + H(+). Specifically methylates the pseudouridine at position 1915 (m3Psi1915) in 23S rRNA. This Xylella fastidiosa (strain M12) protein is Ribosomal RNA large subunit methyltransferase H.